A 359-amino-acid chain; its full sequence is Tryptophan 2,3-dioxygenase (359 aa).

Substrate is bound by residues 38 to 42 (FIIVH) and R109. Heme is bound at residue H295. Residue T309 participates in substrate binding.

Belongs to the tryptophan 2,3-dioxygenase family. In terms of assembly, homotetramer. The cofactor is heme.

The catalysed reaction is L-tryptophan + O2 = N-formyl-L-kynurenine. It functions in the pathway amino-acid degradation; L-tryptophan degradation via kynurenine pathway; L-kynurenine from L-tryptophan: step 1/2. In terms of biological role, heme-dependent dioxygenase that catalyzes the oxidative cleavage of the L-tryptophan (L-Trp) pyrrole ring and converts L-tryptophan to N-formyl-L-kynurenine. Catalyzes the oxidative cleavage of the indole moiety. The polypeptide is Tryptophan 2,3-dioxygenase (Bdellovibrio bacteriovorus (strain ATCC 15356 / DSM 50701 / NCIMB 9529 / HD100)).